Reading from the N-terminus, the 339-residue chain is Ureidoglycine carbamoyltransferase (339 aa).

It belongs to the aspartate/ornithine carbamoyltransferase superfamily. In terms of assembly, homodimer.

It catalyses the reaction (S)-2-ureidoglycine + carbamoyl phosphate = allantoate + phosphate + H(+). The protein operates within purine metabolism. In terms of biological role, catalyzes the phosphorolysis of allantoate to ureidoglycine and carbamoyl phosphate. Is likely involved in a purine degradation pathway. The polypeptide is Ureidoglycine carbamoyltransferase (Rubrobacter xylanophilus (strain DSM 9941 / JCM 11954 / NBRC 16129 / PRD-1)).